We begin with the raw amino-acid sequence, 345 residues long: Metal-dependent phosphohydrolase cns2 (345 aa).

The HD domain occupies 70–171; the sequence is RLEHSVGAFI…QLCADRLDYA (102 aa).

As to quaternary structure, interacts with cns1.

It is found in the lipid droplet. It participates in secondary metabolite biosynthesis. Metal-dependent phosphohydrolase; part of the gene cluster that mediates the biosynthesis of cordycepin (COR) and pentostatin (PTN), two adenosine analogs with related bioactivity profiles as both mimic adenosine and can inhibit some of the processes that are adenosine dependent. Within the pathway, cns2 catalyzes dephosphorylation of 3'-AMP to produce 2'-carbonyl-3'-deoxyadenosine (2'-C-3'-dA). The first step of cordycepin biosynthesis involves hydroxyl phosphorylation of the 3'-OH position on adenosine to produce adenosine-3'-monophosphate (3'-AMP), catalyzed by kinase activity of cns3. Next, 3'-AMP is dephosphorylated to 2'-carbonyl-3'-deoxyadenosine by cns2, which is finally converted to cordycepin (3'-deoxyadenosine) by the oxidoreductase cns1. The polypeptide is Metal-dependent phosphohydrolase cns2 (Cordyceps militaris (strain CM01) (Caterpillar fungus)).